A 195-amino-acid polypeptide reads, in one-letter code: Phosphoribosylglycinamide formyltransferase (195 aa).

12–14 (GSN) contributes to the N(1)-(5-phospho-beta-D-ribosyl)glycinamide binding site. (6R)-10-formyltetrahydrofolate is bound by residues lysine 65, 90–93 (MRLI), and asparagine 107. Catalysis depends on histidine 109, which acts as the Proton donor.

This sequence belongs to the GART family.

The catalysed reaction is N(1)-(5-phospho-beta-D-ribosyl)glycinamide + (6R)-10-formyltetrahydrofolate = N(2)-formyl-N(1)-(5-phospho-beta-D-ribosyl)glycinamide + (6S)-5,6,7,8-tetrahydrofolate + H(+). It functions in the pathway purine metabolism; IMP biosynthesis via de novo pathway; N(2)-formyl-N(1)-(5-phospho-D-ribosyl)glycinamide from N(1)-(5-phospho-D-ribosyl)glycinamide (10-formyl THF route): step 1/1. Functionally, catalyzes the transfer of a formyl group from 10-formyltetrahydrofolate to 5-phospho-ribosyl-glycinamide (GAR), producing 5-phospho-ribosyl-N-formylglycinamide (FGAR) and tetrahydrofolate. The sequence is that of Phosphoribosylglycinamide formyltransferase from Bacillus subtilis (strain 168).